Here is a 59-residue protein sequence, read N- to C-terminus: Protein QUA-QUINE STARCH (59 aa).

In terms of tissue distribution, expressed in hypocotyls, leaves, vasculature, hydathodes, trichomes, pedicels, sepals, filaments, mature pollen, stigma papillae, styles, siliques, root and shoot tips, but not in shoot meristem, petals or root epidermis.

Its subcellular location is the cytoplasm. In terms of biological role, involved in regulating carbon and nitrogen allocation to starch and protein. This is Protein QUA-QUINE STARCH from Arabidopsis thaliana (Mouse-ear cress).